Reading from the N-terminus, the 115-residue chain is Large ribosomal subunit protein bL20 (115 aa).

The protein belongs to the bacterial ribosomal protein bL20 family.

Binds directly to 23S ribosomal RNA and is necessary for the in vitro assembly process of the 50S ribosomal subunit. It is not involved in the protein synthesizing functions of that subunit. This is Large ribosomal subunit protein bL20 from Borrelia turicatae (strain 91E135).